Consider the following 229-residue polypeptide: Ribonuclease 3 (229 aa).

Positions 4-133 (WEELQESVGF…FIGALYLDNG (130 aa)) constitute an RNase III domain. E46 contributes to the Mg(2+) binding site. D50 is an active-site residue. Residues D119 and E122 each coordinate Mg(2+). The active site involves E122. The region spanning 159-228 (DYKTQLQEIV…AQFAINQLTH (70 aa)) is the DRBM domain.

The protein belongs to the ribonuclease III family. In terms of assembly, homodimer. It depends on Mg(2+) as a cofactor.

The protein localises to the cytoplasm. It carries out the reaction Endonucleolytic cleavage to 5'-phosphomonoester.. Its function is as follows. Digests double-stranded RNA. Involved in the processing of primary rRNA transcript to yield the immediate precursors to the large and small rRNAs (23S and 16S). Processes some mRNAs, and tRNAs when they are encoded in the rRNA operon. Processes pre-crRNA and tracrRNA of type II CRISPR loci if present in the organism. This is Ribonuclease 3 from Listeria monocytogenes serotype 4b (strain CLIP80459).